A 439-amino-acid polypeptide reads, in one-letter code: 3-phosphoshikimate 1-carboxyvinyltransferase (439 aa).

3-phosphoshikimate contacts are provided by lysine 31, serine 32, and arginine 36. Residue lysine 31 participates in phosphoenolpyruvate binding. Phosphoenolpyruvate contacts are provided by glycine 103 and arginine 131. Positions 175, 177, 322, and 349 each coordinate 3-phosphoshikimate. Position 177 (glutamine 177) interacts with phosphoenolpyruvate. Catalysis depends on aspartate 322, which acts as the Proton acceptor. Positions 353 and 397 each coordinate phosphoenolpyruvate.

This sequence belongs to the EPSP synthase family. As to quaternary structure, monomer.

It localises to the cytoplasm. The catalysed reaction is 3-phosphoshikimate + phosphoenolpyruvate = 5-O-(1-carboxyvinyl)-3-phosphoshikimate + phosphate. It participates in metabolic intermediate biosynthesis; chorismate biosynthesis; chorismate from D-erythrose 4-phosphate and phosphoenolpyruvate: step 6/7. Catalyzes the transfer of the enolpyruvyl moiety of phosphoenolpyruvate (PEP) to the 5-hydroxyl of shikimate-3-phosphate (S3P) to produce enolpyruvyl shikimate-3-phosphate and inorganic phosphate. The chain is 3-phosphoshikimate 1-carboxyvinyltransferase from Clostridium tetani (strain Massachusetts / E88).